A 599-amino-acid chain; its full sequence is DNA primase (599 aa).

The segment at 38–62 (CPFHDEKTPSFTVSEDKQICHCFGC) adopts a CHC2-type zinc-finger fold. The Toprim domain occupies 260–341 (DEIVLLEGFM…NVFVIQLPSG (82 aa)). Positions 266, 310, and 312 each coordinate Mg(2+).

Belongs to the DnaG primase family. Monomer. Interacts with DnaB. The cofactor is Zn(2+). It depends on Mg(2+) as a cofactor.

It carries out the reaction ssDNA + n NTP = ssDNA/pppN(pN)n-1 hybrid + (n-1) diphosphate.. Functionally, RNA polymerase that catalyzes the synthesis of short RNA molecules used as primers for DNA polymerase during DNA replication. This is DNA primase from Staphylococcus aureus (strain MRSA252).